A 124-amino-acid polypeptide reads, in one-letter code: Chemotaxis protein CheY1 (124 aa).

The region spanning 2 to 120 (KLLVVDDSST…VLKEKLEVVL (119 aa)) is the Response regulatory domain. 4 residues coordinate Mg(2+): Asp-7, Asp-8, Asp-53, and Asn-55. Asp-53 is subject to 4-aspartylphosphate.

As to quaternary structure, interacts (when phosphorylated) with FliM. The cofactor is Mg(2+). Phosphorylated by CheAY. Dephosphorylated (inactivated) by CheZ.

The protein resides in the cytoplasm. Functionally, chemotactic response regulator protein that modulates the rotation direction of bacterial flagellar motors. Plays an important role in the colonization and infection of Helicobacter pylori. Upon phosphorylation by CheA, interacts with the flagellar motor protein FliM to cause clockwise flagellar rotation and bacterial reversals, as opposed to straight swimming when CheY1 is not phosphorylated. The polypeptide is Chemotaxis protein CheY1 (cheY1) (Helicobacter pylori (strain J99 / ATCC 700824) (Campylobacter pylori J99)).